The primary structure comprises 507 residues: MTDDPGSGFTTVWNAVVSELNGDPKVDDGPSSDANLSAPLTPQQRAWLNLVQPLTIVEGFALLSVPSSFVQNEIERHLRAPITDALSRRLGHQIQLGVRIAPPATDEADDTTVPPSENPATTSPDTTTDNDEIDDSAAARGDNQHSWPSYFTERPRNTDSATAGVTSLNRRYTFDTFVIGASNRFAHAAALAIAEAPARAYNPLFIWGESGLGKTHLLHAAGNYAQRLFPGMRVKYVSTEEFTNDFINSLRDDRKVAFKRSYRDVDVLLVDDIQFIEGKEGIQEEFFHTFNTLHNANKQIVISSDRPPKQLATLEDRLRTRFEWGLITDVQPPELETRIAILRKKAQMERLAIPDDVLELIASSIERNIRELEGALIRVTAFASLNKTPIDKALAEIVLRDLIADANTMQISAATIMAATAEYFDTTVEELRGPGKTRALAQSRQIAMYLCRELTDLSLPKIGQAFGRDHTTVMYAQRKILSEMAERREVFDHVKELTTRIRQRSKR.

The segment at methionine 1–threonine 112 is domain I, interacts with DnaA modulators. Residues arginine 99–threonine 162 form a disordered region. Positions valine 113–threonine 127 are enriched in polar residues. Residues valine 113–threonine 166 form a domain II region. The segment at serine 167–alanine 383 is domain III, AAA+ region. ATP is bound by residues glycine 211, glycine 213, lysine 214, and threonine 215. The segment at serine 384 to arginine 507 is domain IV, binds dsDNA.

The protein belongs to the DnaA family. As to quaternary structure, oligomerizes as a right-handed, spiral filament on DNA at oriC.

It is found in the cytoplasm. Functionally, plays an essential role in the initiation and regulation of chromosomal replication. ATP-DnaA binds to the origin of replication (oriC) to initiate formation of the DNA replication initiation complex once per cell cycle. Binds the DnaA box (a 9 base pair repeat at the origin) and separates the double-stranded (ds)DNA. Forms a right-handed helical filament on oriC DNA; dsDNA binds to the exterior of the filament while single-stranded (ss)DNA is stabiized in the filament's interior. The ATP-DnaA-oriC complex binds and stabilizes one strand of the AT-rich DNA unwinding element (DUE), permitting loading of DNA polymerase. After initiation quickly degrades to an ADP-DnaA complex that is not apt for DNA replication. Binds acidic phospholipids. This chain is Chromosomal replication initiator protein DnaA, found in Mycobacterium bovis (strain ATCC BAA-935 / AF2122/97).